The sequence spans 222 residues: UPF0758 protein Lcho_0695 (222 aa).

The region spanning 100 to 222 is the MPN domain; it reads VFDSPQAVRD…VVSFAERGLL (123 aa). H171, H173, and D184 together coordinate Zn(2+). The short motif at 171 to 184 is the JAMM motif element; that stretch reads HNHPSGVAEPSRAD.

It belongs to the UPF0758 family.

The protein is UPF0758 protein Lcho_0695 of Leptothrix cholodnii (strain ATCC 51168 / LMG 8142 / SP-6) (Leptothrix discophora (strain SP-6)).